The following is a 266-amino-acid chain: uncharacterized protein (266 aa).

The next 7 membrane-spanning stretches (helical) occupy residues 25–45 (LPSL…GYLL), 64–84 (IGAA…AELI), 111–131 (IVTI…GHLV), 158–178 (VLIS…LSFG), 186–206 (ILGI…HVVA), 209–229 (FVIP…IGNI), and 230–250 (IPAF…IYFI).

It belongs to the FNT transporter (TC 1.A.16) family.

It is found in the cell membrane. This is an uncharacterized protein from Bacillus subtilis (strain 168).